Here is a 166-residue protein sequence, read N- to C-terminus: NAD(P)H-quinone oxidoreductase subunit I, chloroplastic (166 aa).

2 4Fe-4S ferredoxin-type domains span residues 55-84 (GRIHFEFDKCIACEVCVRVCPIDLPVVDWK) and 95-124 (LNYSIDFGICIFCGNCVEYCPTNCLSMTEE). Residues cysteine 64, cysteine 67, cysteine 70, cysteine 74, cysteine 104, cysteine 107, cysteine 110, and cysteine 114 each contribute to the [4Fe-4S] cluster site.

This sequence belongs to the complex I 23 kDa subunit family. In terms of assembly, NDH is composed of at least 16 different subunits, 5 of which are encoded in the nucleus. It depends on [4Fe-4S] cluster as a cofactor.

It localises to the plastid. It is found in the chloroplast thylakoid membrane. It catalyses the reaction a plastoquinone + NADH + (n+1) H(+)(in) = a plastoquinol + NAD(+) + n H(+)(out). The enzyme catalyses a plastoquinone + NADPH + (n+1) H(+)(in) = a plastoquinol + NADP(+) + n H(+)(out). NDH shuttles electrons from NAD(P)H:plastoquinone, via FMN and iron-sulfur (Fe-S) centers, to quinones in the photosynthetic chain and possibly in a chloroplast respiratory chain. The immediate electron acceptor for the enzyme in this species is believed to be plastoquinone. Couples the redox reaction to proton translocation, and thus conserves the redox energy in a proton gradient. The sequence is that of NAD(P)H-quinone oxidoreductase subunit I, chloroplastic from Marshallia caespitosa (Barbara's buttons).